The sequence spans 511 residues: Lariat debranching enzyme (511 aa).

Residues Cys-52, His-54, Asp-83, and Asn-128 each coordinate a divalent metal cation. The segment at 168–198 (SGIYSHGDVEFSHYERPAFAERDVKSAYHVR) is lariat recognition loop. Residues His-226, His-278, and His-280 each coordinate a divalent metal cation. Residues 473–511 (EDDFIIDRGHGSEEPEAKKSRLEEEKKKKKKKIENLKTL) form a disordered region. Residues 477–498 (IIDRGHGSEEPEAKKSRLEEEK) show a composition bias toward basic and acidic residues.

The protein belongs to the lariat debranching enzyme family. Requires Fe(2+) as cofactor. It depends on Zn(2+) as a cofactor. Mn(2+) is required as a cofactor.

It is found in the nucleus. Its activity is regulated as follows. Active in presence of diverse metals including Fe(2+), Zn(2+), Mn(2+). Binds two metal cations in two adjacent alpha and beta metal-binding pockets. Cleaves the 2'-5' phosphodiester linkage at the branch point of lariat intron pre-mRNAs after splicing and converts them into linear molecules that are subsequently degraded. It thereby facilitates ribonucleotide turnover. The protein is Lariat debranching enzyme (dbr-1) of Caenorhabditis briggsae.